A 122-amino-acid chain; its full sequence is Large ribosomal subunit protein uL18 (122 aa).

Residues 1 to 19 (MSTLSRKQKTQKRHKRLRR) show a composition bias toward basic residues. Residues 1 to 26 (MSTLSRKQKTQKRHKRLRRNLSGTDQ) are disordered.

Belongs to the universal ribosomal protein uL18 family. Part of the 50S ribosomal subunit; part of the 5S rRNA/L5/L18/L25 subcomplex. Contacts the 5S and 23S rRNAs.

Its function is as follows. This is one of the proteins that bind and probably mediate the attachment of the 5S RNA into the large ribosomal subunit, where it forms part of the central protuberance. The sequence is that of Large ribosomal subunit protein uL18 from Prochlorococcus marinus (strain SARG / CCMP1375 / SS120).